We begin with the raw amino-acid sequence, 528 residues long: Sensory rhodopsin I transducer (528 aa).

Helical transmembrane passes span 11-31 and 35-55; these read GAKL…VGVV and VAST…INAA. HAMP domains are found at residues 55–107 and 142–195; these read AETV…DRLS and TAYQ…ETIE. A Methyl-accepting transducer domain is found at 214 to 455; it reads TSRRVQQEVD…ATADSIADVT (242 aa). At glutamate 259 the chain carries Glutamate methyl ester (Glu).

The protein belongs to the methyl-accepting chemotaxis (MCP) protein family. In terms of assembly, interacts with Sop1.

It localises to the cell membrane. Its function is as follows. Transduces signals from the phototaxis receptor sensory rhodopsin I (Sop1). The protein is Sensory rhodopsin I transducer (htr1) of Haloarcula marismortui (strain ATCC 43049 / DSM 3752 / JCM 8966 / VKM B-1809) (Halobacterium marismortui).